Here is a 531-residue protein sequence, read N- to C-terminus: 2,3-bisphosphoglycerate-independent phosphoglycerate mutase (531 aa).

Positions 13 and 63 each coordinate Mn(2+). Residue S63 is the Phosphoserine intermediate of the active site. Substrate contacts are provided by residues H124, 154-155 (RD), R187, R193, 261-264 (RPDR), and K342. Mn(2+) contacts are provided by D420, H424, D462, H463, and H480.

This sequence belongs to the BPG-independent phosphoglycerate mutase family. As to quaternary structure, monomer. The cofactor is Mn(2+).

It catalyses the reaction (2R)-2-phosphoglycerate = (2R)-3-phosphoglycerate. It participates in carbohydrate degradation; glycolysis; pyruvate from D-glyceraldehyde 3-phosphate: step 3/5. Its function is as follows. Catalyzes the interconversion of 2-phosphoglycerate and 3-phosphoglycerate. The polypeptide is 2,3-bisphosphoglycerate-independent phosphoglycerate mutase (Mycoplasma capricolum subsp. capricolum (strain California kid / ATCC 27343 / NCTC 10154)).